The following is a 322-amino-acid chain: Picrinine-N-methytransferase (322 aa).

The SAM motif I stretch occupies residues 103 to 112 (MLDVGCGLGG). Residues 166–174 (GTFDLVFTI) are SAM motif II. The tract at residues 193 to 202 (VAAPGAPVVI) is SAM motif III.

The protein belongs to the class I-like SAM-binding methyltransferase superfamily. gTMT family. As to quaternary structure, homodimer. In terms of tissue distribution, accumulates in tissues actively synthesizing monoterpenoid indole alkaloids (MIAs) (at protein level). Mainly expressed in young leaves, but barely in roots and stems.

It is found in the cytoplasm. The protein resides in the cytosol. It catalyses the reaction picrinine + S-adenosyl-L-methionine = ervincine + S-adenosyl-L-homocysteine + H(+). Its pathway is alkaloid biosynthesis; vindoline biosynthesis. In terms of biological role, S-adenosyl-L-methionine-dependent N-methyltransferase involved in the biosynthesis of biologically active monoterpenoid indole alkaloids (MIAs) natural products including vindoline. Catalyzes the conversion of picrinine to N-methylpicrinine (ervincine). Also accepts, with low efficiency, 21-hydroxycyclolochnericine and norajmaline as substrates. The chain is Picrinine-N-methytransferase from Vinca minor (Common periwinkle).